Consider the following 777-residue polypeptide: Ral guanine nucleotide dissociation stimulator-like 2 (777 aa).

Positions 1–54 (MLPRPLRLLLDTSPPGGVVLSSFRSRDPEEGGGPGGLVVGGGQEEEEEEEEEAP) are disordered. Position 13 is a phosphoserine (S13). Residues 31 to 42 (GGGPGGLVVGGG) show a composition bias toward gly residues. A compositionally biased stretch (acidic residues) spans 43-54 (QEEEEEEEEEAP). The 125-residue stretch at 88–212 (SSRRLRAGTL…GSADLIRNLR (125 aa)) folds into the N-terminal Ras-GEF domain. One can recognise a Ras-GEF domain in the interval 243–513 (LADHLAEQLT…HRVSCEVEPP (271 aa)). Residue S409 is modified to Phosphoserine. Low complexity-rich tracts occupy residues 581 to 610 (SLDS…SPRP) and 618 to 632 (ASCG…EEAS). Disordered regions lie at residues 581–644 (SLDS…GSGP) and 734–766 (RRSS…PRIK). Residues 633 to 644 (GGTGYGGEGSGP) are compositionally biased toward gly residues. The Ras-associating domain occupies 648-735 (DCRIIRVQME…HDFLLRQRRR (88 aa)). A compositionally biased stretch (low complexity) spans 740–755 (TPGVTSGPSASGTPPS).

Interacts with SAMD9.

Its function is as follows. Probable guanine nucleotide exchange factor. Putative effector of Ras and/or Rap. Associates with the GTP-bound form of Rap 1A and H-Ras in vitro. The sequence is that of Ral guanine nucleotide dissociation stimulator-like 2 (RGL2) from Homo sapiens (Human).